Here is a 600-residue protein sequence, read N- to C-terminus: NADH-quinone oxidoreductase subunit C/D (600 aa).

The tract at residues 1–190 is NADH dehydrogenase I subunit C; the sequence is MIDLMPKKNT…EPFFLNEQKE (190 aa). The tract at residues 214-600 is NADH dehydrogenase I subunit D; sequence EFMFLNLGPN…IDFVMSDVDR (387 aa).

In the N-terminal section; belongs to the complex I 30 kDa subunit family. It in the C-terminal section; belongs to the complex I 49 kDa subunit family. NDH-1 is composed of 13 different subunits. Subunits NuoB, CD, E, F, and G constitute the peripheral sector of the complex.

Its subcellular location is the cell inner membrane. It carries out the reaction a quinone + NADH + 5 H(+)(in) = a quinol + NAD(+) + 4 H(+)(out). Functionally, NDH-1 shuttles electrons from NADH, via FMN and iron-sulfur (Fe-S) centers, to quinones in the respiratory chain. The immediate electron acceptor for the enzyme in this species is believed to be ubiquinone. Couples the redox reaction to proton translocation (for every two electrons transferred, four hydrogen ions are translocated across the cytoplasmic membrane), and thus conserves the redox energy in a proton gradient. This chain is NADH-quinone oxidoreductase subunit C/D, found in Buchnera aphidicola subsp. Acyrthosiphon pisum (strain APS) (Acyrthosiphon pisum symbiotic bacterium).